Reading from the N-terminus, the 248-residue chain is Mannose-binding protein C (248 aa).

An N-terminal signal peptide occupies residues 1-20 (MSLFPSLPLLLLSMVAASYS). The Collagen-like domain occupies 42-99 (GINGFPGKDGRDGTKGEKGEPGQGLRGLQGPPGKLGPPGNPGPSGSPGPKGQKGDPGK). Residues 43–113 (INGFPGKDGR…DSSLAASERK (71 aa)) are disordered. Proline 47 carries the post-translational modification 4-hydroxyproline. Basic and acidic residues predominate over residues 49–61 (KDGRDGTKGEKGE). Residues proline 73, proline 79, proline 82, and proline 88 each carry the 4-hydroxyproline modification. A compositionally biased stretch (pro residues) spans 75–87 (KLGPPGNPGPSGS). A compositionally biased stretch (basic and acidic residues) spans 93 to 102 (QKGDPGKSPD). The stretch at 112-130 (RKALQTEMARIKKWLTFSL) forms a coiled coil. Residues 134-245 (VGNKFFLTNG…CSTSHLAVCE (112 aa)) enclose the C-type lectin domain. Intrachain disulfides connect cysteine 155–cysteine 244 and cysteine 222–cysteine 236.

In terms of assembly, oligomeric complex of 3 or more homotrimers. Interacts with MASP1 and MASP2. Interacts with MEP1A and MEP1B and may inhibit their catalytic activity. Post-translationally, hydroxylation on proline residues within the sequence motif, GXPG, is most likely to be 4-hydroxy as this fits the requirement for 4-hydroxylation in vertebrates.

It is found in the secreted. In terms of biological role, calcium-dependent lectin involved in innate immune defense. Binds mannose, fucose and N-acetylglucosamine on different microorganisms and activates the lectin complement pathway. Binds to late apoptotic cells, as well as to apoptotic blebs and to necrotic cells, but not to early apoptotic cells, facilitating their uptake by macrophages. The protein is Mannose-binding protein C (MBL2) of Gorilla gorilla gorilla (Western lowland gorilla).